The primary structure comprises 188 residues: Elongation factor P (188 aa).

Position 34 is an N6-(3,6-diaminohexanoyl)-5-hydroxylysine (lysine 34).

It belongs to the elongation factor P family. May be beta-lysylated on the epsilon-amino group of Lys-34 by the combined action of EpmA and EpmB, and then hydroxylated on the C5 position of the same residue by EpmC (if this protein is present). Lysylation is critical for the stimulatory effect of EF-P on peptide-bond formation. The lysylation moiety may extend toward the peptidyltransferase center and stabilize the terminal 3-CCA end of the tRNA. Hydroxylation of the C5 position on Lys-34 may allow additional potential stabilizing hydrogen-bond interactions with the P-tRNA.

It is found in the cytoplasm. It functions in the pathway protein biosynthesis; polypeptide chain elongation. In terms of biological role, involved in peptide bond synthesis. Alleviates ribosome stalling that occurs when 3 or more consecutive Pro residues or the sequence PPG is present in a protein, possibly by augmenting the peptidyl transferase activity of the ribosome. Modification of Lys-34 is required for alleviation. The protein is Elongation factor P of Vibrio parahaemolyticus serotype O3:K6 (strain RIMD 2210633).